Consider the following 388-residue polypeptide: Succinate--CoA ligase [ADP-forming] subunit beta (388 aa).

The ATP-grasp domain occupies 9-244 (KQLFAEYGLP…PSQDDPREAH (236 aa)). ATP contacts are provided by residues Lys46, 53-55 (GRG), Glu99, Thr102, and Glu107. Positions 199 and 213 each coordinate Mg(2+). Substrate-binding positions include Asn264 and 321-323 (GIV).

Belongs to the succinate/malate CoA ligase beta subunit family. Heterotetramer of two alpha and two beta subunits. The cofactor is Mg(2+).

The catalysed reaction is succinate + ATP + CoA = succinyl-CoA + ADP + phosphate. It catalyses the reaction GTP + succinate + CoA = succinyl-CoA + GDP + phosphate. It participates in carbohydrate metabolism; tricarboxylic acid cycle; succinate from succinyl-CoA (ligase route): step 1/1. Its function is as follows. Succinyl-CoA synthetase functions in the citric acid cycle (TCA), coupling the hydrolysis of succinyl-CoA to the synthesis of either ATP or GTP and thus represents the only step of substrate-level phosphorylation in the TCA. The beta subunit provides nucleotide specificity of the enzyme and binds the substrate succinate, while the binding sites for coenzyme A and phosphate are found in the alpha subunit. This Pseudomonas putida (strain GB-1) protein is Succinate--CoA ligase [ADP-forming] subunit beta.